Consider the following 155-residue polypeptide: MLCRTNVLHLRPQLNKFTYLTQFLWLCLFYITFYFVLYSVLVFTNTEWPFILLKKRLVSQEKIRAYQSNDCVGQTRGLTSEPSWRDACWRALILAYLTSIYFFPILGSFPRVLKDQVDFGYIPTVCILLYVIFLFFFDSYRKSLFTTALTHSFWL.

3 helical membrane-spanning segments follow: residues 23-43 (FLWL…VLVF), 89-109 (WRAL…LGSF), and 117-137 (VDFG…LFFF).

The protein belongs to the ATPase protein YMF19 family.

It localises to the mitochondrion membrane. This is Putative ATP synthase protein YMF19-like protein (YMF18) from Marchantia polymorpha (Common liverwort).